The primary structure comprises 814 residues: ATP-dependent RNA helicase dbp-7 (814 aa).

The disordered stretch occupies residues 26 to 102 (GGRWRDRVKA…PPPPPTHAMK (77 aa)). Basic and acidic residues-rich tracts occupy residues 28 to 42 (RWRDRVKAQKGEKGG) and 69 to 78 (QRTEDGDSGR). The Q motif motif lies at 145–174 (ENFLSLGLSRRVSQHLATKLEMKAPTAIQK). The region spanning 178–384 (PQLVKEDSDA…EISLEDAVHI (207 aa)) is the Helicase ATP-binding domain. 191–198 (AETGSGKT) lines the ATP pocket. The DEAD box signature appears at 313–316 (DEGD). The Helicase C-terminal domain maps to 422-622 (RLVTLIALLK…GFATNINVPG (201 aa)). 3 disordered regions span residues 464 to 483 (TPRAEPEPKPEGEAPTKPNI), 662 to 695 (ESKSEKFAASKQGKKGKKDAKKDENKTPDNPLLV), and 741 to 795 (GIGG…AGRR). Residues 467-477 (AEPEPKPEGEA) show a composition bias toward basic and acidic residues. A compositionally biased stretch (acidic residues) spans 779-790 (DDDERDFGAADE).

This sequence belongs to the DEAD box helicase family. DDX31/DBP7 subfamily.

It is found in the nucleus. The protein localises to the nucleolus. The catalysed reaction is ATP + H2O = ADP + phosphate + H(+). In terms of biological role, ATP-binding RNA helicase involved in the biogenesis of 60S ribosomal subunits and is required for the normal formation of 25S and 5.8S rRNAs. This chain is ATP-dependent RNA helicase dbp-7 (dbp-7), found in Neurospora crassa (strain ATCC 24698 / 74-OR23-1A / CBS 708.71 / DSM 1257 / FGSC 987).